Consider the following 322-residue polypeptide: Eukaryotic translation initiation factor 3 subunit I (322 aa).

WD repeat units lie at residues 4 to 43 (GHERSITQIKYNREGDLLFSCSKDQKPNVWYSLNGERLGT), 46 to 85 (GHQGAVWCLDVDWESRKLITGAGDMTTKIWDVEYGTVIAS), 141 to 180 (MTESKITSMLWGPLDETIITGHDNGNIAIWDIRKGQKVVD), 184 to 223 (DHSAGINDMQLSKDGTMFVTASKDTTAKLFDSESLMCLKS), and 281 to 322 (GHFG…NIFE).

Belongs to the eIF-3 subunit I family. As to quaternary structure, component of the eukaryotic translation initiation factor 3 (eIF-3) complex. The eIF-3 complex interacts with pix.

The protein resides in the cytoplasm. Functionally, component of the eukaryotic translation initiation factor 3 (eIF-3) complex, which is involved in protein synthesis of a specialized repertoire of mRNAs and, together with other initiation factors, stimulates binding of mRNA and methionyl-tRNAi to the 40S ribosome. The eIF-3 complex specifically targets and initiates translation of a subset of mRNAs involved in cell proliferation. The sequence is that of Eukaryotic translation initiation factor 3 subunit I from Drosophila yakuba (Fruit fly).